The primary structure comprises 303 residues: Glycine--tRNA ligase alpha subunit (303 aa).

Belongs to the class-II aminoacyl-tRNA synthetase family. Tetramer of two alpha and two beta subunits.

The protein resides in the cytoplasm. It carries out the reaction tRNA(Gly) + glycine + ATP = glycyl-tRNA(Gly) + AMP + diphosphate. In Klebsiella pneumoniae subsp. pneumoniae (strain ATCC 700721 / MGH 78578), this protein is Glycine--tRNA ligase alpha subunit.